A 333-amino-acid polypeptide reads, in one-letter code: Protein FLAP1 homolog A (333 aa).

The chain crosses the membrane as a helical span at residues 26–46 (VVIIFVLAFTLVFTPTFEAEA). The segment at 53 to 74 (IGGGSFRAPSAPSRSYSGPSGG) is disordered. Residues 58 to 70 (FRAPSAPSRSYSG) are compositionally biased toward low complexity. Transmembrane regions (helical) follow at residues 92 to 112 (IIPFFGFGGGFGGIFGILVMI) and 261 to 281 (GEYILVTIIAAALGNLNLPAV).

It belongs to the FLAP family.

It localises to the cellular thylakoid membrane. The protein localises to the cell inner membrane. Essential for photosynthetic growth under fluctuating light by modulating PxcA- and PxcL-dependent intracellular pH regulation via proton transport (e.g. transient pH reduction upon transition from dark to light followed by an increase in the light until light-to-dark shift). This chain is Protein FLAP1 homolog A, found in Synechocystis sp. (strain ATCC 27184 / PCC 6803 / Kazusa).